Reading from the N-terminus, the 305-residue chain is UPF0612 protein C337.02c (305 aa).

Coiled-coil stretches lie at residues 27 to 63 and 120 to 207; these read IERYERSVDSTLLEIDENKREALEKNILRKDRKMKYE and NDMN…DARS.

It belongs to the UPF0612 family.

This chain is UPF0612 protein C337.02c, found in Schizosaccharomyces pombe (strain 972 / ATCC 24843) (Fission yeast).